Here is a 351-residue protein sequence, read N- to C-terminus: S-adenosylmethionine:tRNA ribosyltransferase-isomerase (351 aa).

This sequence belongs to the QueA family. As to quaternary structure, monomer.

It localises to the cytoplasm. It catalyses the reaction 7-aminomethyl-7-carbaguanosine(34) in tRNA + S-adenosyl-L-methionine = epoxyqueuosine(34) in tRNA + adenine + L-methionine + 2 H(+). The protein operates within tRNA modification; tRNA-queuosine biosynthesis. Its function is as follows. Transfers and isomerizes the ribose moiety from AdoMet to the 7-aminomethyl group of 7-deazaguanine (preQ1-tRNA) to give epoxyqueuosine (oQ-tRNA). The polypeptide is S-adenosylmethionine:tRNA ribosyltransferase-isomerase (Photobacterium profundum (strain SS9)).